A 506-amino-acid polypeptide reads, in one-letter code: Kynurenine 3-monooxygenase (506 aa).

The disordered stretch occupies residues 153 to 174 (QETSLLPGEESEKDKKQNTEDE). Basic and acidic residues predominate over residues 162-171 (ESEKDKKQNT).

This sequence belongs to the aromatic-ring hydroxylase family. KMO subfamily. It depends on FAD as a cofactor.

The protein localises to the mitochondrion outer membrane. It carries out the reaction L-kynurenine + NADPH + O2 + H(+) = 3-hydroxy-L-kynurenine + NADP(+) + H2O. It functions in the pathway cofactor biosynthesis; NAD(+) biosynthesis; quinolinate from L-kynurenine: step 1/3. Catalyzes the hydroxylation of L-kynurenine (L-Kyn) to form 3-hydroxy-L-kynurenine (L-3OHKyn). Required for synthesis of quinolinic acid. The sequence is that of Kynurenine 3-monooxygenase from Cryptococcus neoformans var. neoformans serotype D (strain JEC21 / ATCC MYA-565) (Filobasidiella neoformans).